The sequence spans 236 residues: uncharacterized protein (236 aa).

A signal peptide spans 1 to 24 (MRKKHFNMILKLALISSLLALAAS). Asn59, Asn171, and Asn197 each carry an N-linked (GlcNAc...) asparagine glycan.

The protein localises to the secreted. This is an uncharacterized protein from Caenorhabditis elegans.